The following is a 254-amino-acid chain: Winged helix repair factor 1 (254 aa).

The short motif at Lys-4 to Pro-21 is the Bipartite nuclear localization signal element. Winged helix domain stretches follow at residues Arg-32–Phe-104, Pro-120–Pro-179, and Gly-180–Thr-254.

The protein belongs to the STK19 family. As to quaternary structure, monomer in solution. Homodimer; when bound to DNA. Component of a transcription-coupled nucleotide excision repair (TC-NER) complex composed of STK19, ERCC6, ERCC8, DDA1, DDB1, ELOF1 and UVSSA which assembles and interacts with the multiprotein RNA polymerase II complex when it stalls at DNA lesions.

It is found in the nucleus. In terms of biological role, DNA-binding protein which is required for efficient transcription-coupled nucleotide excision repair (TC-NER). Acts as part of a TC-NER complex which assembles and interacts with RNA polymerase II (RNAPII) when it stalls at DNA lesions. TC-NER complex subunit UVSSA binds to the GTF2H1/p62 subunit of the TFIIH transcription factor complex, tethering TFIIH to the TC-NER complex. WHR1/STK19 then interacts with the XPD helicase subunit of TFIIH which guides TFIIH to DNA downstream of the stalled RNAPII, ensuring DNA repair. Directly interacts with RNAPII and also binds to downstream DNA. Promotes the timely removal of DNA damage-stalled RNAPII, allowing downstream NER factors to access DNA lesions. Required for monoubiquitination of UVSSA. Regulates repositioning and stabilization of UVSSA within the TC-NER complex. Stimulates ubiquitination of RNAPII complex member RBP1. Also binds to RNA and regulates the expression levels of many mRNAs. The sequence is that of Winged helix repair factor 1 from Mus musculus (Mouse).